Here is a 92-residue protein sequence, read N- to C-terminus: Small ribosomal subunit protein uS19 (92 aa).

The segment at 73–92 (EFSPSRTYYGHAADKKAKRR) is disordered.

This sequence belongs to the universal ribosomal protein uS19 family.

Protein S19 forms a complex with S13 that binds strongly to the 16S ribosomal RNA. This is Small ribosomal subunit protein uS19 from Maricaulis maris (strain MCS10) (Caulobacter maris).